Here is a 661-residue protein sequence, read N- to C-terminus: PAN2-PAN3 deadenylation complex subunit PAN3 (661 aa).

Disordered stretches follow at residues 1–26 (MASAGKPALDDSRRGTGSPKIKAREN) and 53–130 (DPHK…LRQD). The segment at 26-55 (NAKDTLCRNITIYGRCRYEDKGCAFNHDPH) adopts a C3H1-type zinc-finger fold. Positions 75-102 (SFTPSLLSSNGSSPTSTPATTKKMTTIS) are enriched in low complexity. Polar residues predominate over residues 115–130 (SVVSRSNASTPGLRQD). Positions 263–524 (QTLPNTQLPA…NIDIFITGIS (262 aa)) are pseudokinase domain. Residues Arg-315, 364-371 (DYHPLSKT), and 424-425 (SK) contribute to the ATP site. Positions 525–563 (SQLMSTFDSALHLDDQLTSDLSRELENGRLVRLMTKLNF) form a coiled coil. Residues 564–661 (VNERPEYEHD…ALMKPARRMH (98 aa)) form a knob domain region.

It belongs to the protein kinase superfamily. PAN3 family. As to quaternary structure, homodimer. Forms a heterotrimer with a catalytic subunit pan2 to form the poly(A)-nuclease (PAN) deadenylation complex. Interacts (via PAM-2 motif) with poly(A)-binding protein pab1 (via PABC domain), conferring substrate specificity of the enzyme complex.

The protein resides in the cytoplasm. In terms of biological role, regulatory subunit of the poly(A)-nuclease (PAN) deadenylation complex, one of two cytoplasmic mRNA deadenylases involved in mRNA turnover. PAN specifically shortens poly(A) tails of RNA and the activity is stimulated by poly(A)-binding protein pab1. PAN deadenylation is followed by rapid degradation of the shortened mRNA tails by the CCR4-NOT complex. Deadenylated mRNAs are then degraded by two alternative mechanisms, namely exosome-mediated 3'-5' exonucleolytic degradation, or deadenylation-dependent mRNA decaping and subsequent 5'-3' exonucleolytic degradation by xrn1. May also be involved in post-transcriptional maturation of mRNA poly(A) tails. pan3 acts as a positive regulator for PAN activity, recruiting the catalytic subunit pan2 to mRNA via its interaction with RNA and with pab1. The protein is PAN2-PAN3 deadenylation complex subunit PAN3 of Neosartorya fischeri (strain ATCC 1020 / DSM 3700 / CBS 544.65 / FGSC A1164 / JCM 1740 / NRRL 181 / WB 181) (Aspergillus fischerianus).